Here is a 714-residue protein sequence, read N- to C-terminus: Inducible lysine decarboxylase (714 aa).

Lys-367 is modified (N6-(pyridoxal phosphate)lysine).

This sequence belongs to the Orn/Lys/Arg decarboxylase class-I family. Homodecamer. Interacts with RavA. Requires pyridoxal 5'-phosphate as cofactor.

The protein localises to the cytoplasm. The enzyme catalyses L-lysine + H(+) = cadaverine + CO2. The protein is Inducible lysine decarboxylase (cadA) of Salmonella typhi.